A 71-amino-acid chain; its full sequence is UPF0435 protein SE_1565 (71 aa).

This sequence belongs to the UPF0435 family.

The chain is UPF0435 protein SE_1565 from Staphylococcus epidermidis (strain ATCC 12228 / FDA PCI 1200).